The sequence spans 389 residues: Chalcone synthase 4-1 (389 aa).

The active site involves cysteine 164.

The protein belongs to the thiolase-like superfamily. Chalcone/stilbene synthases family.

The enzyme catalyses (E)-4-coumaroyl-CoA + 3 malonyl-CoA + 3 H(+) = 2',4,4',6'-tetrahydroxychalcone + 3 CO2 + 4 CoA. Its pathway is secondary metabolite biosynthesis; flavonoid biosynthesis. Its function is as follows. The primary product of this enzyme is 4,2',4',6'-tetrahydroxychalcone (also termed naringenin-chalcone or chalcone) which can under specific conditions spontaneously isomerize into naringenin. This Medicago sativa (Alfalfa) protein is Chalcone synthase 4-1 (CHS4-1).